We begin with the raw amino-acid sequence, 68 residues long: Non-specific lipid-transfer protein 2 (68 aa).

It belongs to the plant LTP family.

Functionally, plant non-specific lipid-transfer proteins transfer phospholipids as well as galactolipids across membranes. May play a role in wax or cutin deposition in the cell walls of expanding epidermal cells and certain secretory tissues. This chain is Non-specific lipid-transfer protein 2, found in Prunus armeniaca (Apricot).